The primary structure comprises 304 residues: Tissue factor pathway inhibitor (304 aa).

The signal sequence occupies residues 1-28 (MIYTMKKVHALWVSICLMLNLAPAPLNA). 2 BPTI/Kunitz inhibitor domains span residues 54–104 (CAFK…KKVC) and 125–175 (CFLE…KNTC). Cystine bridges form between C54/C104, C63/C87, C79/C100, C125/C175, C134/C158, and C150/C171. An N-linked (GlcNAc...) asparagine glycan is attached at N145. An N-linked (GlcNAc...) asparagine glycan is attached at N195. The region spanning 217 to 267 (CLAPADRGLCRANENRFYYNSVIGKCRPFKYSGCGGNENNFTSKRECLRAC) is the BPTI/Kunitz inhibitor 3 domain. Intrachain disulfides connect C217–C267, C226–C250, and C242–C263. A glycan (N-linked (GlcNAc...) asparagine) is linked at N256.

Post-translationally, O-glycosylated.

It localises to the secreted. In terms of biological role, inhibits factor X (X(a)) directly and, in a Xa-dependent way, inhibits VIIa/tissue factor activity, presumably by forming a quaternary Xa/LACI/VIIa/TF complex. It possesses an antithrombotic action and also the ability to associate with lipoproteins in plasma. The polypeptide is Tissue factor pathway inhibitor (TFPI) (Macaca mulatta (Rhesus macaque)).